The primary structure comprises 229 residues: Heptaprenylglyceryl phosphate synthase (229 aa).

Asp13 and Thr39 together coordinate Mg(2+).

This sequence belongs to the GGGP/HepGP synthase family. In terms of assembly, homodimer. Requires Mg(2+) as cofactor.

The enzyme catalyses sn-glycerol 1-phosphate + all-trans-heptaprenyl diphosphate = 3-heptaprenyl-sn-glycero-1-phosphate + diphosphate. Its pathway is membrane lipid metabolism; glycerophospholipid metabolism. In terms of biological role, prenyltransferase that catalyzes in vivo the transfer of the heptaprenyl moiety of heptaprenyl pyrophosphate (HepPP; 35 carbon atoms) to the C3 hydroxyl of sn-glycerol-1-phosphate (G1P), producing heptaprenylglyceryl phosphate (HepGP). This reaction is an ether-bond-formation step in the biosynthesis of archaea-type G1P-based membrane lipids found in Bacillales. The sequence is that of Heptaprenylglyceryl phosphate synthase from Lysinibacillus sphaericus (strain C3-41).